We begin with the raw amino-acid sequence, 442 residues long: Elongation factor 1-alpha 1 (442 aa).

The tr-type G domain maps to 5–227; the sequence is KEHLNLVVIG…AALDSFKIPK (223 aa). Residues 14-21 are G1; the sequence is GHVDSGKS. GTP is bound at residue 14–21; the sequence is GHVDSGKS. The segment at 70-74 is G2; that stretch reads GITID. The G3 stretch occupies residues 91–94; sequence DAPG. GTP contacts are provided by residues 91–95 and 153–156; these read DAPGH and NKMD. The tract at residues 153 to 156 is G4; it reads NKMD. The segment at 194–196 is G5; the sequence is SGF.

It belongs to the TRAFAC class translation factor GTPase superfamily. Classic translation factor GTPase family. EF-Tu/EF-1A subfamily.

The protein localises to the cytoplasm. Functionally, this protein promotes the GTP-dependent binding of aminoacyl-tRNA to the A-site of ribosomes during protein biosynthesis. This Euplotes crassus protein is Elongation factor 1-alpha 1 (EFA1).